The chain runs to 33 residues: MSDIN-like toxin proprotein 6 (33 aa).

Residues 1-10 (MSDINATRLP) constitute a propeptide that is removed on maturation. The cyclopeptide (Leu-Pro) cross-link spans 11 to 20 (LILLAALGIP). A propeptide spanning residues 21–33 (SDDADSTLTRGER) is cleaved from the precursor.

Belongs to the MSDIN fungal toxin family. In terms of processing, processed by the macrocyclase-peptidase enzyme POPB to yield a toxic cyclic decapeptide. POPB first removes 10 residues from the N-terminus. Conformational trapping of the remaining peptide forces the enzyme to release this intermediate rather than proceed to macrocyclization. The enzyme rebinds the remaining peptide in a different conformation and catalyzes macrocyclization of the N-terminal 10 residues.

Its function is as follows. Probable toxin that belongs to the MSDIN-like toxin family responsible for a large number of food poisoning cases and deaths. In Amanita phalloides (Death cap), this protein is MSDIN-like toxin proprotein 6.